Reading from the N-terminus, the 538-residue chain is Putative cysteine ligase BshC (538 aa).

Residues L462–L533 are a coiled coil.

It belongs to the BshC family.

The sequence is that of Putative cysteine ligase BshC from Christiangramia forsetii (strain DSM 17595 / CGMCC 1.15422 / KT0803) (Gramella forsetii).